The chain runs to 344 residues: 2,3,4,5-tetrahydropyridine-2,6-dicarboxylate N-succinyltransferase (344 aa).

Glu-205 contacts Mg(2+). Glu-221 functions as the Acyl-anhydride intermediate in the catalytic mechanism. Residues Arg-223, Gly-238, Ser-241, Ala-264, 279–280 (EA), Gly-287, Lys-304, and 317–320 (RRNS) contribute to the succinyl-CoA site.

It belongs to the type 2 tetrahydrodipicolinate N-succinyltransferase family. Homotrimer.

It localises to the cytoplasm. The catalysed reaction is (S)-2,3,4,5-tetrahydrodipicolinate + succinyl-CoA + H2O = (S)-2-succinylamino-6-oxoheptanedioate + CoA. It participates in amino-acid biosynthesis; L-lysine biosynthesis via DAP pathway; LL-2,6-diaminopimelate from (S)-tetrahydrodipicolinate (succinylase route): step 1/3. Functionally, catalyzes the conversion of the cyclic tetrahydrodipicolinate (THDP) into the acyclic N-succinyl-L-2-amino-6-oxopimelate using succinyl-CoA. This chain is 2,3,4,5-tetrahydropyridine-2,6-dicarboxylate N-succinyltransferase, found in Pseudomonas putida (strain ATCC 47054 / DSM 6125 / CFBP 8728 / NCIMB 11950 / KT2440).